Reading from the N-terminus, the 29-residue chain is Potassium channel toxin alpha-KTx 8.4 (29 aa).

3 disulfides stabilise this stretch: cysteine 3/cysteine 19, cysteine 6/cysteine 24, and cysteine 10/cysteine 26.

The protein belongs to the short scorpion toxin superfamily. Potassium channel inhibitor family. Alpha-KTx 08 subfamily. Expressed by the venom gland.

The protein resides in the secreted. Its function is as follows. Inhibits voltage-gated potassium channels. This is Potassium channel toxin alpha-KTx 8.4 from Leiurus hebraeus (Hebrew deathstalker scorpion).